Here is a 264-residue protein sequence, read N- to C-terminus: MSNILTKILARKVEEIAERLLHVSQAELVARCADLPTPRGFAAALQATIVHGDPAVIAEIKKASPSKGVLREDFRPAEIAISYELGGASCLSVLTDVHFFKGHDNYLSQARDACTLPVLRKDFTIDPYQVYEARVLGADCILLIVAALDDAQLVDLSGLALQLGMDVLVEVHDIDELERAIQISAPLIGINNRNLSTFNVSLETTLTMKGLVPRDRLLVSESGILTSADVQRLRAAGVNAFLVGEAFMRAAEPGESLREMFFIT.

The protein belongs to the TrpC family.

The catalysed reaction is 1-(2-carboxyphenylamino)-1-deoxy-D-ribulose 5-phosphate + H(+) = (1S,2R)-1-C-(indol-3-yl)glycerol 3-phosphate + CO2 + H2O. It functions in the pathway amino-acid biosynthesis; L-tryptophan biosynthesis; L-tryptophan from chorismate: step 4/5. This Xylella fastidiosa (strain M12) protein is Indole-3-glycerol phosphate synthase.